The following is a 503-amino-acid chain: MDMGKGRPRLKLPQMPEAHPQKSCAPDIIGSWSLRNREQLRKRKAEAQGRQTSQWLLGEQKKRKYQRTGKGNKRGRKRQGNVEQKAEPWSQTERERVQEVLVSAEEETEHPGNSATEALPLVPSPTKAVPADQCSEAHQESIQCQERAIQNHSQTHLSPTTCQGIAVLQHSPKMCQDMAEPEVFSPNMCQETAVPQTYPPKALEEMAAAEPLSPKMCQETTVSPNHSSKVPQDMAGPEALSPNMCQEPTVPQEHTLKMCHDVARPEVLSPKTHQEMAVPKAFPCVTPGDAAGLEGCAPKALPQSDVAEGCPLDTTPTSVTPEQTTSDPDLGMAVTEGFFSEARECTVSEGVSTKTHQEAVEPEFISHETYKEFTVPIVSSQKTIQESPEPEQYSPETCQPIPGPENYSLETCHEMSGPEDLSIKTCQDREEPKHSLPEGAQKVGGAQGQDADAQDSENAGAFSQDFTEMEEENKADQDPEAPASPQGSQETCPENGIYSSALF.

Basic residues-rich tracts occupy residues methionine 1 to leucine 10 and lysine 61 to glutamine 79. A disordered region spans residues methionine 1–valine 129. The necessary for nuclear localization stretch occupies residues arginine 7–glutamate 87. A phosphoserine mark is found at serine 90, serine 103, serine 124, serine 153, serine 158, serine 171, serine 213, serine 223, serine 228, serine 241, and serine 269. Position 286 is a phosphothreonine (threonine 286). Residues glutamine 381 to phenylalanine 503 form a disordered region. Low complexity predominate over residues glutamine 385–glutamate 396. Phosphoserine is present on residues serine 387 and serine 394. Positions cysteine 426 to leucine 436 are enriched in basic and acidic residues.

In terms of tissue distribution, expressed in hematopoietic precursor cells. Highly expressed in bone marrow, the red pulp of the spleen and round spermatids. Weakly expressed in peripheral blood cells.

It localises to the nucleus. In terms of biological role, regulates the proliferation and differentiation of hematopoietic cells. Overexpression block the TPA-induced megakaryocytic differentiation in the K562 cell model. May also prevent cell apoptosis through the activation of the nuclear factor-kappa B (NF-kB). This is Hemogen (Hemgn) from Mus musculus (Mouse).